We begin with the raw amino-acid sequence, 328 residues long: Probable voltage-gated potassium channel subunit beta (328 aa).

W21, Q27, and D49 together coordinate NADP(+). The active-site Proton donor/acceptor is Y54. NADP(+) contacts are provided by S152, Q178, W207, S208, P209, L210, A211, K218, R229, G285, T287, Q291, E294, and N295.

The protein belongs to the shaker potassium channel beta subunit family. In terms of assembly, forms heteromultimeric complexes with potassium channel alpha subunits. In terms of tissue distribution, expressed in roots, leaves and flowers (at protein level).

Functionally, probable accessory potassium channel protein which modulates the activity of the pore-forming alpha subunit. The polypeptide is Probable voltage-gated potassium channel subunit beta (KAB1) (Arabidopsis thaliana (Mouse-ear cress)).